We begin with the raw amino-acid sequence, 1400 residues long: ABC transporter G family member 30 (1400 aa).

Asparagine 116 carries N-linked (GlcNAc...) asparagine glycosylation. Positions 141–414 constitute an ABC transporter 1 domain; that stretch reads LLSEFICSKK…FEEFGFKCPE (274 aa). 174–181 is an ATP binding site; it reads GPPGCGKT. Residue asparagine 472 is glycosylated (N-linked (GlcNAc...) asparagine). The ABC transmembrane type-2 1 domain maps to 492-704; it reads EMLKACSRRE…AEIGLTANEF (213 aa). 7 consecutive transmembrane segments (helical) span residues 510-530, 553-573, 582-602, 628-648, 652-672, 679-699, and 738-758; these read FIYL…MTVF, LFRL…RLGV, FYPA…LSVL, FLIL…IAAI, IIAS…FGGF, MPAW…EIGL, and TAFG…VLAL. One can recognise an ABC transporter 2 domain in the interval 808–1053; that stretch reads VTFQNVQYYI…VIEYFESFSG (246 aa). 845–852 is an ATP binding site; it reads GVSGAGKT. N-linked (GlcNAc...) asparagine glycans are attached at residues asparagine 899 and asparagine 1040. Positions 1125–1339 constitute an ABC transmembrane type-2 2 domain; the sequence is VQLKACLWKQ…VLEGLLSSQY (215 aa). 7 helical membrane-spanning segments follow: residues 1144-1164, 1179-1199, 1228-1248, 1263-1283, 1289-1309, 1317-1337, and 1372-1392; these read HNIT…LLFW, IFGS…AAVI, VLIE…IVYP, LYSI…MVAL, MAVT…GFVI, WWIW…LLSS, and VVAF…AFFM.

Belongs to the ABC transporter superfamily. ABCG family. PDR (TC 3.A.1.205) subfamily. Confined to roots. In seeds, mainly expressed in the embryo and, to a lesser extent, in the endosperm.

The protein resides in the cell membrane. It catalyses the reaction abscisate(out) + ATP + H2O = abscisate(in) + ADP + phosphate + H(+). Functionally, together with ABCG40, import into the embryo the abscisic acid (ABA) delivered from the endosperm via ABCG25 and ABCG31-mediated export to suppress radicle extension and subsequent embryonic growth. Involved in root secretion of phytochemicals (phenolics and sugars) which regulate soil microbiota, influencing both fungal and bacterial communities. May be a general defense protein. This is ABC transporter G family member 30 from Arabidopsis thaliana (Mouse-ear cress).